The following is a 1112-amino-acid chain: Constitutive coactivator of PPAR-gamma-like protein 1 (1112 aa).

Residues 339–403 (PPHYLARPNP…YSLSEPALTL (65 aa)) form an interaction with YES1, SRC and FYN region. The segment at 372 to 525 (QAKPAVPQVP…GKGSHMGTVQ (154 aa)) is disordered. Polar residues-rich tracts occupy residues 403–418 (LDTS…SYSN) and 433–445 (SPIN…SPNH). Residues 479-500 (GWEKTGSHAEPLARGDPGDQVK) are compositionally biased toward basic and acidic residues. The segment covering 503–512 (GSSTASSGSQ) has biased composition (polar residues). Thr-653 carries the post-translational modification Phosphothreonine. An RNA binding region spans residues 827-1112 (AEQAAKVEKM…LEAAVLNKEE (286 aa)). Omega-N-methylarginine is present on residues Arg-871, Arg-882, and Arg-884. Residues 919–943 (AFSGSDSSRTSKSQGGVQPIPSQGG) form a disordered region. The segment covering 922 to 934 (GSDSSRTSKSQGG) has biased composition (polar residues). Lys-930 bears the N6-acetyllysine mark. Ser-958 is modified (phosphoserine). Arg-980 and Arg-984 each carry omega-N-methylarginine. A phosphoserine mark is found at Ser-1021 and Ser-1042. The tract at residues 1030 to 1090 (KSKSGESKSS…PCNTNPHLNA (61 aa)) is disordered. Polar residues predominate over residues 1070–1090 (HSESALNNDSKPCNTNPHLNA).

It belongs to the constitutive coactivator of PPAR-gamma family. As to quaternary structure, interacts with PURA. Interacts with SRC family protein kinases YES1, SRC and FYN. Upon tyrosine phosphorylation, interacts with PIK3R1. Interacts with IGF2BP1/IMP-1 in an RNA-dependent manner. Arg-980 is dimethylated, probably to asymmetric dimethylarginine. In terms of processing, phosphorylated on tyrosine by src family kinases upon ultraviolet exposure. In terms of tissue distribution, in the brain, predominantly expressed in the hippocampus, caudate putamen, cerebral cortex and cerebellum. Expression is restricted to neurons (at protein level).

It is found in the cytoplasm. It localises to the cell membrane. Component of the oxidative stress-induced survival signaling. May regulate the activation of SRC family protein kinases. May act as a scaffolding protein enabling SRC family protein kinases to phosphorylate and activate PI3-kinase. Binds IGF2 RNA and promotes the production of IGF2 protein. The polypeptide is Constitutive coactivator of PPAR-gamma-like protein 1 (FAM120A) (Mus musculus (Mouse)).